Reading from the N-terminus, the 360-residue chain is Arginase, non-hepatic 2 (360 aa).

Mn(2+) is bound by residues His122, Asp145, His147, and Asp149. Residues 147-151, 158-160, and Asp204 contribute to the substrate site; these read HADIN and SGN. Mn(2+) contacts are provided by Asp253 and Asp255. Positions 267 and 298 each coordinate substrate.

This sequence belongs to the arginase family. In terms of assembly, homotrimer. Mn(2+) serves as cofactor. As to expression, expressed at differing tadpole stages in tail, intestine, hindlimb and trunk region. Strongest in tadpole tail.

The catalysed reaction is L-arginine + H2O = urea + L-ornithine. It participates in nitrogen metabolism; urea cycle; L-ornithine and urea from L-arginine: step 1/1. Its function is as follows. As well as its role in the urea cycle, may be involved in tissue remodeling. This Xenopus laevis (African clawed frog) protein is Arginase, non-hepatic 2 (arg2-b).